Consider the following 638-residue polypeptide: Sorting nexin-41 (638 aa).

Positions 1–14 are enriched in low complexity; sequence MDSDTSPNPFASSP. The interval 1 to 69 is disordered; sequence MDSDTSPNPF…MGATVPGPKP (69 aa). Residues 15-30 are compositionally biased toward pro residues; it reads PSSPSPRPSLPPPVPR. In terms of domain architecture, PX spans 84–201; that stretch reads GEQVHIVDAL…HRFLEEDVSW (118 aa). 4 residues coordinate a 1,2-diacyl-sn-glycero-3-phospho-(1D-myo-inositol-3-phosphate): Arg-118, Ser-120, Lys-144, and Arg-168. 3 disordered regions span residues 215–239, 408–432, and 545–638; these read KNPL…SEAP, LERG…RERA, and PHPN…LGPL. Over residues 225–239 the composition is skewed to low complexity; that stretch reads PTFQPTTPTSPSEAP. Residues 423 to 432 show a composition bias toward basic and acidic residues; that stretch reads EAARDERERA. A compositionally biased stretch (low complexity) spans 552–562; that stretch reads QTQTQVQSQQS. Positions 585–601 are enriched in basic and acidic residues; that stretch reads MKNEIERVEIEIADKPL.

Belongs to the sorting nexin family.

It is found in the endosome membrane. Its subcellular location is the endomembrane system. Functionally, may be required for cytoplasm to vacuole transport (Cvt) and pexophagy. The sequence is that of Sorting nexin-41 (SNX41) from Cryptococcus neoformans var. neoformans serotype D (strain B-3501A) (Filobasidiella neoformans).